Here is a 1019-residue protein sequence, read N- to C-terminus: Photoactivated adenylate cyclase subunit alpha (1019 aa).

The BLUF 1 domain maps to 55–148; it reads LRRLMYLSAS…GRMYGEWHMK (94 aa). The region spanning 204–332 is the Guanylate cyclase 1 domain; the sequence is VVTFIYLVEF…DCINTASRIT (129 aa). Residues 467 to 559 form the BLUF 2 domain; that stretch reads LITLTYISQA…RVYGSPLDMT (93 aa). Positions 615 to 744 constitute a Guanylate cyclase 2 domain; sequence VMLATDICSF…EVSARVMEVE (130 aa). The disordered stretch occupies residues 822-861; sequence GTNAPGRGAPAGGIPSSPKVRPPGRTNSVSSYTPDPNEAL. The span at 825 to 839 shows a compositional bias: low complexity; sequence APGRGAPAGGIPSSP. Residues 846 to 855 are compositionally biased toward polar residues; that stretch reads RTNSVSSYTP.

This sequence belongs to the adenylyl cyclase class-4/guanylyl cyclase family. In terms of assembly, heterotetramer of two alpha and two beta subunits. FAD serves as cofactor.

It localises to the cell projection. The protein resides in the cilium. The protein localises to the flagellum. The enzyme catalyses ATP = 3',5'-cyclic AMP + diphosphate. With respect to regulation, activity increased by up to 80-fold under blue light. Functionally, acts as a blue light photoreceptor for the step-up photophobic response. Mediates photoavoidance. In Euglena gracilis, this protein is Photoactivated adenylate cyclase subunit alpha.